The chain runs to 394 residues: Elongation factor Tu 2 (394 aa).

The region spanning 10–204 is the tr-type G domain; it reads KPHVNVGTIG…ALDSYIPEPE (195 aa). The segment at 19-26 is G1; the sequence is GHVDHGKT. Position 19–26 (19–26) interacts with GTP; it reads GHVDHGKT. T26 contributes to the Mg(2+) binding site. The tract at residues 60–64 is G2; sequence GITIS. The tract at residues 81 to 84 is G3; it reads DCPG. Residues 81–85 and 136–139 contribute to the GTP site; these read DCPGH and NKCD. The segment at 136–139 is G4; it reads NKCD. The segment at 174–176 is G5; that stretch reads SAL.

The protein belongs to the TRAFAC class translation factor GTPase superfamily. Classic translation factor GTPase family. EF-Tu/EF-1A subfamily. As to quaternary structure, monomer.

The protein localises to the cytoplasm. It catalyses the reaction GTP + H2O = GDP + phosphate + H(+). Its function is as follows. GTP hydrolase that promotes the GTP-dependent binding of aminoacyl-tRNA to the A-site of ribosomes during protein biosynthesis. The sequence is that of Elongation factor Tu 2 from Pseudoalteromonas translucida (strain TAC 125).